The chain runs to 295 residues: Ribosomal RNA small subunit methyltransferase A (295 aa).

Positions 28, 30, 55, 76, 101, and 131 each coordinate S-adenosyl-L-methionine.

The protein belongs to the class I-like SAM-binding methyltransferase superfamily. rRNA adenine N(6)-methyltransferase family. RsmA subfamily.

It is found in the cytoplasm. The catalysed reaction is adenosine(1518)/adenosine(1519) in 16S rRNA + 4 S-adenosyl-L-methionine = N(6)-dimethyladenosine(1518)/N(6)-dimethyladenosine(1519) in 16S rRNA + 4 S-adenosyl-L-homocysteine + 4 H(+). Its function is as follows. Specifically dimethylates two adjacent adenosines (A1518 and A1519) in the loop of a conserved hairpin near the 3'-end of 16S rRNA in the 30S particle. May play a critical role in biogenesis of 30S subunits. This is Ribosomal RNA small subunit methyltransferase A from Pelotomaculum thermopropionicum (strain DSM 13744 / JCM 10971 / SI).